Here is a 554-residue protein sequence, read N- to C-terminus: Glucose-6-phosphate isomerase 1 (554 aa).

Glutamate 359 functions as the Proton donor in the catalytic mechanism. Active-site residues include histidine 390 and lysine 518.

Belongs to the GPI family.

The protein resides in the cytoplasm. It catalyses the reaction alpha-D-glucose 6-phosphate = beta-D-fructose 6-phosphate. Its pathway is carbohydrate biosynthesis; gluconeogenesis. The protein operates within carbohydrate degradation; glycolysis; D-glyceraldehyde 3-phosphate and glycerone phosphate from D-glucose: step 2/4. Its function is as follows. Catalyzes the reversible isomerization of glucose-6-phosphate to fructose-6-phosphate. This Pseudomonas putida (strain ATCC 47054 / DSM 6125 / CFBP 8728 / NCIMB 11950 / KT2440) protein is Glucose-6-phosphate isomerase 1.